A 287-amino-acid chain; its full sequence is Nucleotide-binding protein Asuc_0930 (287 aa).

Residue 8–15 coordinates ATP; that stretch reads GRSGAGKS. GTP is bound at residue 56-59; it reads DIRN.

It belongs to the RapZ-like family.

Functionally, displays ATPase and GTPase activities. This chain is Nucleotide-binding protein Asuc_0930, found in Actinobacillus succinogenes (strain ATCC 55618 / DSM 22257 / CCUG 43843 / 130Z).